A 105-amino-acid polypeptide reads, in one-letter code: U21-theraphotoxin-Cg1a 4 (105 aa).

The signal sequence occupies residues 1–21; it reads MKVSVLITLAVLGVMFLLTSA. Residues 22-48 constitute a propeptide that is removed on maturation; the sequence is EERGSDQMDSPAWLKSMEIIFQSEERE. Disulfide bonds link C49/C63, C56/C68, and C62/C76. A Valine amide modification is found at V82. Residues 83–105 constitute a propeptide that is removed on maturation; sequence GKWEMLINMNIFRIVFSYSMCTV.

Belongs to the neurotoxin 10 (Hwtx-1) family. 05 (F4a) subfamily. As to expression, expressed by the venom gland.

It is found in the secreted. In terms of biological role, probable ion channel inhibitor. This chain is U21-theraphotoxin-Cg1a 4, found in Chilobrachys guangxiensis (Chinese earth tiger tarantula).